The following is a 185-amino-acid chain: Large ribosomal subunit protein uL13 (185 aa).

Belongs to the universal ribosomal protein uL13 family. As to quaternary structure, part of the 50S ribosomal subunit.

Functionally, this protein is one of the early assembly proteins of the 50S ribosomal subunit, although it is not seen to bind rRNA by itself. It is important during the early stages of 50S assembly. In Pyrobaculum islandicum (strain DSM 4184 / JCM 9189 / GEO3), this protein is Large ribosomal subunit protein uL13.